Here is a 189-residue protein sequence, read N- to C-terminus: Interferon alpha-10 (189 aa).

An N-terminal signal peptide occupies residues 1–23; the sequence is MALSFSLLMAVLVLSYKSICSLG. Disulfide bonds link Cys24–Cys122 and Cys52–Cys162.

Belongs to the alpha/beta interferon family.

The protein localises to the secreted. Functionally, produced by macrophages, IFN-alpha have antiviral activities. Interferon stimulates the production of two enzymes: a protein kinase and an oligoadenylate synthetase. This chain is Interferon alpha-10 (IFNA10), found in Homo sapiens (Human).